Here is a 500-residue protein sequence, read N- to C-terminus: Glycerol kinase (500 aa).

Thr-12 is an ADP binding site. Residues Thr-12, Thr-13, and Ser-14 each contribute to the ATP site. Residue Thr-12 participates in sn-glycerol 3-phosphate binding. An ADP-binding site is contributed by Arg-16. Residues Arg-82, Glu-83, Tyr-135, and Asp-245 each contribute to the sn-glycerol 3-phosphate site. Residues Arg-82, Glu-83, Tyr-135, Asp-245, and Gln-246 each contribute to the glycerol site. The ADP site is built by Thr-267 and Gly-310. ATP-binding residues include Thr-267, Gly-310, Gln-314, and Gly-411. Residues Gly-411 and Asn-415 each coordinate ADP.

The protein belongs to the FGGY kinase family. In terms of assembly, homotetramer and homodimer (in equilibrium).

It catalyses the reaction glycerol + ATP = sn-glycerol 3-phosphate + ADP + H(+). It functions in the pathway polyol metabolism; glycerol degradation via glycerol kinase pathway; sn-glycerol 3-phosphate from glycerol: step 1/1. Activated by phosphorylation and inhibited by fructose 1,6-bisphosphate (FBP). Key enzyme in the regulation of glycerol uptake and metabolism. Catalyzes the phosphorylation of glycerol to yield sn-glycerol 3-phosphate. This Clostridium perfringens (strain SM101 / Type A) protein is Glycerol kinase.